A 749-amino-acid chain; its full sequence is Catalase-peroxidase (749 aa).

Basic and acidic residues predominate over residues 1–12; it reads MSSDTSDTRPPH. The tract at residues 1-40 is disordered; sequence MSSDTSDTRPPHSDSGTQSNSESENPIIDSPEPKAHAPLT. Polar residues predominate over residues 14–24; sequence DSGTQSNSESE. Positions 113-240 form a cross-link, tryptophyl-tyrosyl-methioninium (Trp-Tyr) (with M-266); that stretch reads WHAAGTYRIF…FGATTMGLIY (128 aa). The active-site Proton acceptor is the H114. Positions 240-266 form a cross-link, tryptophyl-tyrosyl-methioninium (Tyr-Met) (with W-113); that stretch reads YVNPEGPEGKPDPLAAAHDIRETFGRM. H281 is a binding site for heme b.

Belongs to the peroxidase family. Peroxidase/catalase subfamily. Homodimer or homotetramer. It depends on heme b as a cofactor. In terms of processing, formation of the three residue Trp-Tyr-Met cross-link is important for the catalase, but not the peroxidase activity of the enzyme.

It catalyses the reaction H2O2 + AH2 = A + 2 H2O. The enzyme catalyses 2 H2O2 = O2 + 2 H2O. Bifunctional enzyme with both catalase and broad-spectrum peroxidase activity. The sequence is that of Catalase-peroxidase from Mycobacterium sp. (strain JLS).